Consider the following 351-residue polypeptide: DNA polymerase IV (351 aa).

A UmuC domain is found at 4–184; it reads FIHIDMDCFY…LPLGKIPGVG (181 aa). The Mg(2+) site is built by D8 and D102. E103 is an active-site residue.

The protein belongs to the DNA polymerase type-Y family. As to quaternary structure, monomer. The cofactor is Mg(2+).

It localises to the cytoplasm. The enzyme catalyses DNA(n) + a 2'-deoxyribonucleoside 5'-triphosphate = DNA(n+1) + diphosphate. Poorly processive, error-prone DNA polymerase involved in untargeted mutagenesis. Copies undamaged DNA at stalled replication forks, which arise in vivo from mismatched or misaligned primer ends. These misaligned primers can be extended by PolIV. Exhibits no 3'-5' exonuclease (proofreading) activity. May be involved in translesional synthesis, in conjunction with the beta clamp from PolIII. The protein is DNA polymerase IV of Pseudoalteromonas translucida (strain TAC 125).